The primary structure comprises 423 residues: D-tagatose-1,6-bisphosphate aldolase subunit GatZ (423 aa).

This sequence belongs to the GatZ/KbaZ family. GatZ subfamily. Forms a complex with GatY.

It functions in the pathway carbohydrate metabolism; D-tagatose 6-phosphate degradation; D-glyceraldehyde 3-phosphate and glycerone phosphate from D-tagatose 6-phosphate: step 2/2. Functionally, component of the tagatose-1,6-bisphosphate aldolase GatYZ that is required for full activity and stability of the Y subunit. Could have a chaperone-like function for the proper and stable folding of GatY. When expressed alone, GatZ does not show any aldolase activity. Is involved in the catabolism of galactitol. The sequence is that of D-tagatose-1,6-bisphosphate aldolase subunit GatZ from Salmonella dublin (strain CT_02021853).